We begin with the raw amino-acid sequence, 423 residues long: Diels-Alderase cheD (423 aa).

Residues 1–18 form the signal peptide; sequence MKLCALFAGAVISTSAVA. N-linked (GlcNAc...) asparagine glycans are attached at residues N84 and N132.

This sequence belongs to the Diels-Alderase family.

It participates in secondary metabolite biosynthesis. Its function is as follows. Diels-Alderase; part of the gene cluster that mediates the biosynthesis of chaetoglobosin A which has a unique inhibitory activity against actin polymerization in mammalian cells. Chaetoglobosin A and its intermediates are involved in the morphological differentiation of C.globosum. The first step of the pathway is the synthesis of prochaetoglobosin I via condensation of one acetyl-CoA, 8 malonyl-CoA, and a L-tryptophan molecule by the PKS-NRPS hybrid synthetase cheA, followed by reduction of backbone double bond to install desired geometry by the enoyl reductase cheB. Further multiple oxidation steps performed by the cytochrome P450 monooxygenases cheE and cheG, as well as by the FAD-linked oxidoreductase cheF, lead to the formation of chaetoglobosin A. Depending on the order of action of these reductases, distinct intermediates can be identified. Within the pathway, the cytochrome P450 monooxygenase cheE catalyzes a stereospecific epoxidation on prochaetoglobosin I, cytoglobosin D, and chaetoglobosin J intermediates. The FAD-linked oxidoreductase cheF performs dehydrogenation of the C-20 hydroxyl groups in the 20-dihyrochaetoglobosin A and cytoglobosin D intermediates. Finally, the cytochrome P450 monooxygenase cheG can catalyze the stereospecific dihydroxylation of prochaetoglobosin I and prochaetoglobosin IV at C-19 and C-20, respectively. The Diels-Alderase cheD may play a role in the post-PKS-NRPS biosynthetic steps catalyzing Diels-Alder cyclization. This Chaetomium globosum (strain ATCC 6205 / CBS 148.51 / DSM 1962 / NBRC 6347 / NRRL 1970) (Soil fungus) protein is Diels-Alderase cheD.